The following is a 184-amino-acid chain: ATP synthase subunit delta (184 aa).

This sequence belongs to the ATPase delta chain family. F-type ATPases have 2 components, F(1) - the catalytic core - and F(0) - the membrane proton channel. F(1) has five subunits: alpha(3), beta(3), gamma(1), delta(1), epsilon(1). F(0) has three main subunits: a(1), b(2) and c(10-14). The alpha and beta chains form an alternating ring which encloses part of the gamma chain. F(1) is attached to F(0) by a central stalk formed by the gamma and epsilon chains, while a peripheral stalk is formed by the delta and b chains.

It localises to the cell inner membrane. Functionally, f(1)F(0) ATP synthase produces ATP from ADP in the presence of a proton or sodium gradient. F-type ATPases consist of two structural domains, F(1) containing the extramembraneous catalytic core and F(0) containing the membrane proton channel, linked together by a central stalk and a peripheral stalk. During catalysis, ATP synthesis in the catalytic domain of F(1) is coupled via a rotary mechanism of the central stalk subunits to proton translocation. In terms of biological role, this protein is part of the stalk that links CF(0) to CF(1). It either transmits conformational changes from CF(0) to CF(1) or is implicated in proton conduction. This Dichelobacter nodosus (strain VCS1703A) protein is ATP synthase subunit delta.